Reading from the N-terminus, the 428-residue chain is Enolase 1 (428 aa).

Residue Gln167 coordinates (2R)-2-phosphoglycerate. The active-site Proton donor is Glu209. Residues Asp246, Glu288, and Asp315 each contribute to the Mg(2+) site. The (2R)-2-phosphoglycerate site is built by Lys340, Arg369, Ser370, and Lys391. Residue Lys340 is the Proton acceptor of the active site.

This sequence belongs to the enolase family. In terms of assembly, component of the RNA degradosome, a multiprotein complex involved in RNA processing and mRNA degradation. Mg(2+) is required as a cofactor.

It localises to the cytoplasm. It is found in the secreted. The protein localises to the cell surface. It catalyses the reaction (2R)-2-phosphoglycerate = phosphoenolpyruvate + H2O. Its pathway is carbohydrate degradation; glycolysis; pyruvate from D-glyceraldehyde 3-phosphate: step 4/5. Its function is as follows. Catalyzes the reversible conversion of 2-phosphoglycerate (2-PG) into phosphoenolpyruvate (PEP). It is essential for the degradation of carbohydrates via glycolysis. This chain is Enolase 1, found in Pseudomonas syringae pv. syringae (strain B728a).